A 324-amino-acid chain; its full sequence is METEEEMKESSISMVEAKLPPGFRFHPKDDELVCDYLMRRSLHNNHRPPLVLIQVDLNKCEPWDIPKMACVGGKDWYFYSQRDRKYATGLRTNRATATGYWKATGKDRTILRKGKLVGMRKTLVFYQGRAPRGRKTDWVMHEFRLQGSHHPPNHSLSSPKEDWVLCRVFHKNTEGVICRDNMGSCFDETASASLPPLMDPYINFDQEPSSYLSDDHHYIINEHVPCFSNLSQNQTLNSNLTNSVSELKIPCKNPNPLFTGGSASATLTGLDSFCSSDQMVLRALLSQLTKIDGSLGPKESQSYGEGSSESLLTDIGIPSTVWNC.

The 153-residue stretch at 19-171 folds into the NAC domain; it reads LPPGFRFHPK…DWVLCRVFHK (153 aa). The short motif at 120–137 is the Bipartite nuclear localization signal element; the sequence is RKTLVFYQGRAPRGRKTD.

As to quaternary structure, dimer. Interacts with SINAT5. In terms of processing, ubiquitinated. The interaction with SINAT5 mediate its proteasome-dependent degradation. Predominantly expressed in the root tip and in lateral root initiation sites. Also detected in expanding cotyledon, and in leaf primordia.

The protein localises to the nucleus. Functionally, transcriptional activator that mediates auxin signaling to promote lateral root development. Activates the expression of two downstream auxin-responsive genes, DBP and AIR3. The sequence is that of NAC domain-containing protein 21/22 (NAC021) from Arabidopsis thaliana (Mouse-ear cress).